The sequence spans 94 residues: Aspartyl/glutamyl-tRNA(Asn/Gln) amidotransferase subunit C (94 aa).

This sequence belongs to the GatC family. Heterotrimer of A, B and C subunits.

The enzyme catalyses L-glutamyl-tRNA(Gln) + L-glutamine + ATP + H2O = L-glutaminyl-tRNA(Gln) + L-glutamate + ADP + phosphate + H(+). It carries out the reaction L-aspartyl-tRNA(Asn) + L-glutamine + ATP + H2O = L-asparaginyl-tRNA(Asn) + L-glutamate + ADP + phosphate + 2 H(+). Functionally, allows the formation of correctly charged Asn-tRNA(Asn) or Gln-tRNA(Gln) through the transamidation of misacylated Asp-tRNA(Asn) or Glu-tRNA(Gln) in organisms which lack either or both of asparaginyl-tRNA or glutaminyl-tRNA synthetases. The reaction takes place in the presence of glutamine and ATP through an activated phospho-Asp-tRNA(Asn) or phospho-Glu-tRNA(Gln). In Desulfatibacillum aliphaticivorans, this protein is Aspartyl/glutamyl-tRNA(Asn/Gln) amidotransferase subunit C.